The sequence spans 83 residues: Cytochrome b559 subunit alpha (83 aa).

A helical transmembrane segment spans residues 21-35; it reads VIHSITIPSLFIAGW. His-23 serves as a coordination point for heme.

It belongs to the PsbE/PsbF family. In terms of assembly, heterodimer of an alpha subunit and a beta subunit. PSII is composed of 1 copy each of membrane proteins PsbA, PsbB, PsbC, PsbD, PsbE, PsbF, PsbH, PsbI, PsbJ, PsbK, PsbL, PsbM, PsbT, PsbX, PsbY, PsbZ, Psb30/Ycf12, at least 3 peripheral proteins of the oxygen-evolving complex and a large number of cofactors. It forms dimeric complexes. It depends on heme b as a cofactor.

It is found in the plastid. It localises to the chloroplast thylakoid membrane. Functionally, this b-type cytochrome is tightly associated with the reaction center of photosystem II (PSII). PSII is a light-driven water:plastoquinone oxidoreductase that uses light energy to abstract electrons from H(2)O, generating O(2) and a proton gradient subsequently used for ATP formation. It consists of a core antenna complex that captures photons, and an electron transfer chain that converts photonic excitation into a charge separation. This is Cytochrome b559 subunit alpha from Mesembryanthemum crystallinum (Common ice plant).